The primary structure comprises 445 residues: UDP-N-acetylmuramoylalanine--D-glutamate ligase (445 aa).

An ATP-binding site is contributed by 117–123 (GSNGKTT).

The protein belongs to the MurCDEF family.

The protein resides in the cytoplasm. The enzyme catalyses UDP-N-acetyl-alpha-D-muramoyl-L-alanine + D-glutamate + ATP = UDP-N-acetyl-alpha-D-muramoyl-L-alanyl-D-glutamate + ADP + phosphate + H(+). Its pathway is cell wall biogenesis; peptidoglycan biosynthesis. In terms of biological role, cell wall formation. Catalyzes the addition of glutamate to the nucleotide precursor UDP-N-acetylmuramoyl-L-alanine (UMA). The sequence is that of UDP-N-acetylmuramoylalanine--D-glutamate ligase from Neisseria meningitidis serogroup B (strain ATCC BAA-335 / MC58).